A 362-amino-acid polypeptide reads, in one-letter code: Shewanella-like protein phosphatase 1 (362 aa).

The first 23 residues, 1–23, serve as a signal peptide directing secretion; that stretch reads MIFKKALYILLFLYIAIVKKGES. Mn(2+) is bound by residues D65, H67, D101, and N136. H137 functions as the Proton donor in the catalytic mechanism. H196 is a Mn(2+) binding site.

Belongs to the metallophosphoesterase superfamily. SLP family. It depends on Mn(2+) as a cofactor.

Functionally, phosphatase which plays an essential role in the development and differentiation of the ookinete and in the formation of ookinete micronemes. This chain is Shewanella-like protein phosphatase 1, found in Plasmodium berghei (strain Anka).